Here is an 852-residue protein sequence, read N- to C-terminus: Exported protein YdbA (852 aa).

The first 21 residues, 1 to 21, serve as a signal peptide directing secretion; sequence MQRKTLLSACIALALSGQGWA. Disordered stretches follow at residues 30 to 50, 91 to 145, 307 to 354, 407 to 449, and 506 to 531; these read TTGE…KLSP, DDDH…FNND, TITN…QDGD, TNGG…KVIQ, and NGGT…VDGK. The segment covering 307–319 has biased composition (low complexity); it reads TITNGGTGTQING. Over residues 339-348 the composition is skewed to polar residues; that stretch reads GTEINGNNGK. The segment covering 506-516 has biased composition (low complexity); that stretch reads NGGTGTQINGN. A compositionally biased stretch (polar residues) spans 517 to 526; that stretch reads DATANNSGKT.

The protein localises to the secreted. Functionally, the full-length protein (which is about 2000 amino acids long) is part of the autotransporter family. In Escherichia coli (strain K12), this protein is Exported protein YdbA (ydbA).